Here is a 350-residue protein sequence, read N- to C-terminus: Beta-ketodecanoyl-[acyl-carrier-protein] synthase (350 aa).

Cys133 is an active-site residue.

The protein belongs to the thiolase-like superfamily. Beta-ketoacyl-ACP synthases family.

The enzyme catalyses octanoyl-CoA + malonyl-[ACP] + H(+) = 3-oxodecanoyl-[ACP] + CO2 + CoA. It participates in lipid metabolism; fatty acid biosynthesis. Catalyzes the condensation of octanoyl-CoA, obtained from exogenously supplied fatty acids via beta-oxidation, with malonyl-[acyl-carrier protein], forming 3-oxodecanoyl-[acyl-carrier protein], an intermediate of the fatty acid elongation cycle that can then be extended to supply all of the cellular fatty acid needs. The enzyme thereby shunts fatty acid degradation intermediates from the beta-oxidation pathway into de novo fatty acid biosynthesis. This Pseudomonas aeruginosa (strain ATCC 15692 / DSM 22644 / CIP 104116 / JCM 14847 / LMG 12228 / 1C / PRS 101 / PAO1) protein is Beta-ketodecanoyl-[acyl-carrier-protein] synthase.